A 375-amino-acid chain; its full sequence is UDP-N-acetylglucosamine--N-acetylmuramyl-(pentapeptide) pyrophosphoryl-undecaprenol N-acetylglucosamine transferase (375 aa).

UDP-N-acetyl-alpha-D-glucosamine contacts are provided by residues T13–G15, N124, R165, S193, and Q294.

The protein belongs to the glycosyltransferase 28 family. MurG subfamily.

Its subcellular location is the cell inner membrane. It catalyses the reaction di-trans,octa-cis-undecaprenyl diphospho-N-acetyl-alpha-D-muramoyl-L-alanyl-D-glutamyl-meso-2,6-diaminopimeloyl-D-alanyl-D-alanine + UDP-N-acetyl-alpha-D-glucosamine = di-trans,octa-cis-undecaprenyl diphospho-[N-acetyl-alpha-D-glucosaminyl-(1-&gt;4)]-N-acetyl-alpha-D-muramoyl-L-alanyl-D-glutamyl-meso-2,6-diaminopimeloyl-D-alanyl-D-alanine + UDP + H(+). It functions in the pathway cell wall biogenesis; peptidoglycan biosynthesis. In terms of biological role, cell wall formation. Catalyzes the transfer of a GlcNAc subunit on undecaprenyl-pyrophosphoryl-MurNAc-pentapeptide (lipid intermediate I) to form undecaprenyl-pyrophosphoryl-MurNAc-(pentapeptide)GlcNAc (lipid intermediate II). The sequence is that of UDP-N-acetylglucosamine--N-acetylmuramyl-(pentapeptide) pyrophosphoryl-undecaprenol N-acetylglucosamine transferase from Brucella anthropi (strain ATCC 49188 / DSM 6882 / CCUG 24695 / JCM 21032 / LMG 3331 / NBRC 15819 / NCTC 12168 / Alc 37) (Ochrobactrum anthropi).